The chain runs to 448 residues: N-succinylarginine dihydrolase (448 aa).

Residues 19–28, Asn-110, and 137–138 contribute to the substrate site; these read GGLSYGNVAS and HR. Glu-174 is a catalytic residue. Arg-214 serves as a coordination point for substrate. The active site involves His-250. The substrate site is built by Asp-252 and Asn-365. Catalysis depends on Cys-371, which acts as the Nucleophile.

Belongs to the succinylarginine dihydrolase family. Homodimer.

The catalysed reaction is N(2)-succinyl-L-arginine + 2 H2O + 2 H(+) = N(2)-succinyl-L-ornithine + 2 NH4(+) + CO2. Its pathway is amino-acid degradation; L-arginine degradation via AST pathway; L-glutamate and succinate from L-arginine: step 2/5. In terms of biological role, catalyzes the hydrolysis of N(2)-succinylarginine into N(2)-succinylornithine, ammonia and CO(2). This Pseudomonas aeruginosa (strain LESB58) protein is N-succinylarginine dihydrolase.